Reading from the N-terminus, the 406-residue chain is Corticosteroid-binding globulin (406 aa).

A signal peptide spans 1–22 (MLLTLYACLLWLSTSGLWTSQA). 3 N-linked (GlcNAc...) asparagine glycosylation sites follow: N95, N119, and N223. Residue Q253 participates in cortisol binding. The N-linked (GlcNAc...) asparagine glycan is linked to N259. Cortisol is bound by residues Q285 and W394.

Belongs to the serpin family.

The protein localises to the secreted. Functionally, major transport protein for glucocorticoids and progestins in the blood of almost all vertebrate species. The polypeptide is Corticosteroid-binding globulin (Serpina6) (Sus scrofa (Pig)).